An 80-amino-acid chain; its full sequence is Large ribosomal subunit protein uL24 (80 aa).

This sequence belongs to the universal ribosomal protein uL24 family. Part of the 50S ribosomal subunit.

Its function is as follows. One of two assembly initiator proteins, it binds directly to the 5'-end of the 23S rRNA, where it nucleates assembly of the 50S subunit. One of the proteins that surrounds the polypeptide exit tunnel on the outside of the subunit. The polypeptide is Large ribosomal subunit protein uL24 (Chlorobaculum parvum (strain DSM 263 / NCIMB 8327) (Chlorobium vibrioforme subsp. thiosulfatophilum)).